The sequence spans 431 residues: Glycerol-3-phosphate dehydrogenase [NAD(P)+] (431 aa).

Residues S79, F80, R100, and K173 each coordinate NADPH. 2 residues coordinate sn-glycerol 3-phosphate: K173 and G201. An NADPH-binding site is contributed by A205. Sn-glycerol 3-phosphate is bound by residues K256, D309, S319, R320, and N321. K256 serves as the catalytic Proton acceptor. R320 contacts NADPH. E346 lines the NADPH pocket.

The protein belongs to the NAD-dependent glycerol-3-phosphate dehydrogenase family.

The protein localises to the cytoplasm. The catalysed reaction is sn-glycerol 3-phosphate + NAD(+) = dihydroxyacetone phosphate + NADH + H(+). It carries out the reaction sn-glycerol 3-phosphate + NADP(+) = dihydroxyacetone phosphate + NADPH + H(+). The protein operates within membrane lipid metabolism; glycerophospholipid metabolism. Its function is as follows. Catalyzes the reduction of the glycolytic intermediate dihydroxyacetone phosphate (DHAP) to sn-glycerol 3-phosphate (G3P), the key precursor for phospholipid synthesis. This is Glycerol-3-phosphate dehydrogenase [NAD(P)+] from Psychrobacter cryohalolentis (strain ATCC BAA-1226 / DSM 17306 / VKM B-2378 / K5).